An 887-amino-acid polypeptide reads, in one-letter code: DNA gyrase subunit A (887 aa).

A Topo IIA-type catalytic domain is found at L35–L501. Y123 (O-(5'-phospho-DNA)-tyrosine intermediate) is an active-site residue. The GyrA-box signature appears at Q528–G534. The tract at residues K811–R865 is disordered. Over residues D813–Q823 the composition is skewed to acidic residues.

The protein belongs to the type II topoisomerase GyrA/ParC subunit family. Heterotetramer, composed of two GyrA and two GyrB chains. In the heterotetramer, GyrA contains the active site tyrosine that forms a transient covalent intermediate with DNA, while GyrB binds cofactors and catalyzes ATP hydrolysis.

It localises to the cytoplasm. The enzyme catalyses ATP-dependent breakage, passage and rejoining of double-stranded DNA.. In terms of biological role, a type II topoisomerase that negatively supercoils closed circular double-stranded (ds) DNA in an ATP-dependent manner to modulate DNA topology and maintain chromosomes in an underwound state. Negative supercoiling favors strand separation, and DNA replication, transcription, recombination and repair, all of which involve strand separation. Also able to catalyze the interconversion of other topological isomers of dsDNA rings, including catenanes and knotted rings. Type II topoisomerases break and join 2 DNA strands simultaneously in an ATP-dependent manner. The protein is DNA gyrase subunit A of Staphylococcus aureus (strain MSSA476).